Reading from the N-terminus, the 119-residue chain is Beta-2-microglobulin (119 aa).

An N-terminal signal peptide occupies residues 1-20 (MARFVVVPLLVLVSLFGLEA). An Ig-like C1-type domain is found at 25–114 (PKIQVYSRYP…VTFSTPKTVK (90 aa)). Cys-45 and Cys-100 form a disulfide bridge.

The protein belongs to the beta-2-microglobulin family. In terms of assembly, heterodimer of an alpha chain and a beta chain. Beta-2-microglobulin is the beta-chain of major histocompatibility complex class I molecules.

The protein resides in the secreted. Its function is as follows. Component of the class I major histocompatibility complex (MHC). Involved in the presentation of peptide antigens to the immune system. This Saguinus oedipus (Cotton-top tamarin) protein is Beta-2-microglobulin (B2M).